The sequence spans 164 residues: Vasopressin-neurophysin 2-copeptin (164 aa).

Residues 1–19 (MPDTMLPACFLGLLAFSSA) form the signal peptide. A disulfide bridge connects residues Cys20 and Cys25. Gly28 carries the post-translational modification Glycine amide. Cystine bridges form between Cys41/Cys85, Cys44/Cys58, Cys52/Cys75, Cys59/Cys65, Cys92/Cys104, Cys98/Cys116, and Cys105/Cys110. Asn131 carries N-linked (GlcNAc...) asparagine glycosylation.

The protein belongs to the vasopressin/oxytocin family. In terms of assembly, interacts with vasopressin receptors V1bR/AVPR1B (Ki=85 pM), V1aR/AVPR1A (Ki=0.6 nM) and V2R/AVPR2 (Ki=4.9 nM). Interacts with oxytocin receptor (OXTR) (Ki=110 nM). (Microbial infection) May interact with SARS coronavirus-2/SARS-CoV-2; they may form a complex with secreted ACE2.

The protein localises to the secreted. Its function is as follows. Specifically binds vasopressin. In terms of biological role, has a direct antidiuretic action on the kidney, it also causes vasoconstriction of the peripheral vessels. Acts by binding to vasopressin receptors (V1bR/AVPR1B, V1aR/AVPR1A, and V2R/AVPR2). The chain is Vasopressin-neurophysin 2-copeptin (AVP) from Homo sapiens (Human).